A 156-amino-acid polypeptide reads, in one-letter code: Small ribosomal subunit protein uS7 (156 aa).

Part of the 30S ribosomal subunit. Contacts proteins S9 and S11.

Its function is as follows. One of the primary rRNA binding proteins, it binds directly to 16S rRNA where it nucleates assembly of the head domain of the 30S subunit. Is located at the subunit interface close to the decoding center, probably blocks exit of the E-site tRNA. This chain is Small ribosomal subunit protein uS7, found in Rhodopseudomonas palustris (strain ATCC BAA-98 / CGA009).